We begin with the raw amino-acid sequence, 395 residues long: Tyrosine--tRNA ligase (395 aa).

Residues 42–51 carry the 'HIGH' region motif; sequence PTAPDIHLGH. The short motif at 226–230 is the 'KMSKS' region element; that stretch reads KMSKS. Lys229 contacts ATP. One can recognise an S4 RNA-binding domain in the interval 334 to 394; it reads IGLANLLKEA…GKRKFARVTV (61 aa).

It belongs to the class-I aminoacyl-tRNA synthetase family. TyrS type 2 subfamily. As to quaternary structure, homodimer.

The protein resides in the cytoplasm. The enzyme catalyses tRNA(Tyr) + L-tyrosine + ATP = L-tyrosyl-tRNA(Tyr) + AMP + diphosphate + H(+). Functionally, catalyzes the attachment of tyrosine to tRNA(Tyr) in a two-step reaction: tyrosine is first activated by ATP to form Tyr-AMP and then transferred to the acceptor end of tRNA(Tyr). The sequence is that of Tyrosine--tRNA ligase from Mannheimia succiniciproducens (strain KCTC 0769BP / MBEL55E).